A 391-amino-acid chain; its full sequence is NADH-quinone oxidoreductase subunit D (391 aa).

Belongs to the complex I 49 kDa subunit family. NDH-1 is composed of 14 different subunits. Subunits NuoB, C, D, E, F, and G constitute the peripheral sector of the complex.

It is found in the cell inner membrane. The catalysed reaction is a quinone + NADH + 5 H(+)(in) = a quinol + NAD(+) + 4 H(+)(out). In terms of biological role, NDH-1 shuttles electrons from NADH, via FMN and iron-sulfur (Fe-S) centers, to quinones in the respiratory chain. The immediate electron acceptor for the enzyme in this species is believed to be ubiquinone. Couples the redox reaction to proton translocation (for every two electrons transferred, four hydrogen ions are translocated across the cytoplasmic membrane), and thus conserves the redox energy in a proton gradient. This Rickettsia conorii (strain ATCC VR-613 / Malish 7) protein is NADH-quinone oxidoreductase subunit D.